The chain runs to 409 residues: Elongation factor Tu, chloroplastic (409 aa).

A tr-type G domain is found at 10-214 (KPHVNIGTIG…AVDTYIPTPE (205 aa)). Positions 19–26 (GHVDHGKT) are G1. GTP is bound at residue 19–26 (GHVDHGKT). Residue Thr26 participates in Mg(2+) binding. The segment at 60-64 (GITIN) is G2. A G3 region spans residues 81–84 (DCPG). GTP is bound by residues 81-85 (DCPGH) and 136-139 (NKED). Positions 136–139 (NKED) are G4. Residues 174–176 (SAL) are G5.

This sequence belongs to the TRAFAC class translation factor GTPase superfamily. Classic translation factor GTPase family. EF-Tu/EF-1A subfamily.

The protein resides in the plastid. It is found in the chloroplast. It catalyses the reaction GTP + H2O = GDP + phosphate + H(+). In terms of biological role, GTP hydrolase that promotes the GTP-dependent binding of aminoacyl-tRNA to the A-site of ribosomes during protein biosynthesis. This is Elongation factor Tu, chloroplastic (tufA) from Porphyra purpurea (Red seaweed).